We begin with the raw amino-acid sequence, 111 residues long: Large ribosomal subunit protein uL22 (111 aa).

This sequence belongs to the universal ribosomal protein uL22 family. As to quaternary structure, part of the 50S ribosomal subunit.

Functionally, this protein binds specifically to 23S rRNA; its binding is stimulated by other ribosomal proteins, e.g. L4, L17, and L20. It is important during the early stages of 50S assembly. It makes multiple contacts with different domains of the 23S rRNA in the assembled 50S subunit and ribosome. In terms of biological role, the globular domain of the protein is located near the polypeptide exit tunnel on the outside of the subunit, while an extended beta-hairpin is found that lines the wall of the exit tunnel in the center of the 70S ribosome. The polypeptide is Large ribosomal subunit protein uL22 (Xylella fastidiosa (strain 9a5c)).